A 213-amino-acid chain; its full sequence is Orotate phosphoribosyltransferase (213 aa).

Lys26 contacts 5-phospho-alpha-D-ribose 1-diphosphate. 34–35 contacts orotate; that stretch reads FF. 5-phospho-alpha-D-ribose 1-diphosphate is bound by residues 72 to 73, Arg99, Lys100, Lys103, His105, and 124 to 132; these read YK and DDVITAGTA. Orotate-binding residues include Thr128 and Arg156.

It belongs to the purine/pyrimidine phosphoribosyltransferase family. PyrE subfamily. As to quaternary structure, homodimer. Requires Mg(2+) as cofactor.

The catalysed reaction is orotidine 5'-phosphate + diphosphate = orotate + 5-phospho-alpha-D-ribose 1-diphosphate. It participates in pyrimidine metabolism; UMP biosynthesis via de novo pathway; UMP from orotate: step 1/2. Its function is as follows. Catalyzes the transfer of a ribosyl phosphate group from 5-phosphoribose 1-diphosphate to orotate, leading to the formation of orotidine monophosphate (OMP). In Escherichia coli O139:H28 (strain E24377A / ETEC), this protein is Orotate phosphoribosyltransferase.